The chain runs to 76 residues: DNA-directed RNA polymerase subunit epsilon (76 aa).

Belongs to the RNA polymerase subunit epsilon family. In terms of assembly, RNAP is composed of a core of 2 alpha, a beta and a beta' subunit. The core is associated with a delta subunit, and at least one of epsilon or omega. When a sigma factor is associated with the core the holoenzyme is formed, which can initiate transcription.

It catalyses the reaction RNA(n) + a ribonucleoside 5'-triphosphate = RNA(n+1) + diphosphate. In terms of biological role, a non-essential component of RNA polymerase (RNAP). This chain is DNA-directed RNA polymerase subunit epsilon, found in Streptococcus equi subsp. zooepidemicus (strain H70).